The following is a 130-amino-acid chain: Small ribosomal subunit protein uS8 (130 aa).

The protein belongs to the universal ribosomal protein uS8 family. In terms of assembly, part of the 30S ribosomal subunit. Contacts proteins S5 and S12.

One of the primary rRNA binding proteins, it binds directly to 16S rRNA central domain where it helps coordinate assembly of the platform of the 30S subunit. The protein is Small ribosomal subunit protein uS8 of Klebsiella pneumoniae (strain 342).